The sequence spans 379 residues: Thiosulfate/3-mercaptopyruvate sulfurtransferase 1, mitochondrial (379 aa).

A mitochondrion-targeting transit peptide spans 1–56 (MASTLFSRTFLAASHRLITPSLPQKIFNPATFLSRSLHSQLGSASTAYKSTTWARR). Residue Ala57 is modified to N-acetylalanine. Rhodanese domains follow at residues 91-208 (REPD…DVES) and 259-373 (EDPT…LPIE). Cys333 serves as the catalytic Cysteine persulfide intermediate.

Expressed in roots, rosette and cauline leaves, stems, flowers and siliques.

It localises to the mitochondrion. It catalyses the reaction thiosulfate + hydrogen cyanide = thiocyanate + sulfite + 2 H(+). The enzyme catalyses 2-oxo-3-sulfanylpropanoate + [thioredoxin]-dithiol = [thioredoxin]-disulfide + hydrogen sulfide + pyruvate + H(+). Functionally, catalyzes the transfer of a sulfur ion from a donor to cyanide or to other thiol compounds. Substrate preference is 3-mercaptopyruvate &gt; thiosulfate. Involved in embryo and seed development. This Arabidopsis thaliana (Mouse-ear cress) protein is Thiosulfate/3-mercaptopyruvate sulfurtransferase 1, mitochondrial (STR1).